Here is a 378-residue protein sequence, read N- to C-terminus: Coiled-coil domain-containing protein 74A (378 aa).

Disordered regions lie at residues 1-52, 128-211, and 301-328; these read MSGA…RNLD, GGPS…EEPL, and EGSQRPQAAPEEASFPRDQEATHFPKVS. Over residues 34 to 44 the composition is skewed to polar residues; sequence LRPQSPQLRQS. A coiled-coil region spans residues 47–90; the sequence is QKRNLDLEKSLQFLQQQHSEMLAKLHEEIEHLKRENKDLHYKLI. Basic residues predominate over residues 141 to 151; the sequence is RTHRPGGKRGR. Polar residues predominate over residues 165–182; the sequence is DSLSMSSFQSVKSISNSG. 2 stretches are compositionally biased toward basic and acidic residues: residues 194–205 and 314–323; these read QDSKADVSQKAD and SFPRDQEATH.

The sequence is that of Coiled-coil domain-containing protein 74A (CCDC74A) from Homo sapiens (Human).